The primary structure comprises 391 residues: MVTQNKKILIITGSFGNGHLQVTQSVVNQFKEMNLDNLTVIEHDLFLEAHPILTSICKKWYINSFKYFRNMYKAFYYSQPDQLDKCFYKYYGLNKLMNLLLKEKPDLILLTFPTPVMSVLTEQFDMNIPIATVMTDYRMQKNWITPFSQRYYLATEELKDEFASIGIPKDKLKVTGIPISDKFETDIDKTAWLSQNHLDPDKPTILMSAGAFGVSKGFGQMIQEILNRSPHAQVVMICGKNKDLKRSLTSQFKDFNNVLILGYTKHMNEWMASSQLMITKPGGITISEALTRQIPMIFLDPAPGQELENAVYFEEKGYGRIANTPEAAIEQVAALTNAPTKLASMSESMDASRIPYSTYKLCKDLLNLLNHSSHYEEVYGKVPLYAKLFVK.

It belongs to the glycosyltransferase 28 family. UgtP subfamily.

Its subcellular location is the cell membrane. The catalysed reaction is a 1,2-diacyl-3-O-(beta-D-glucopyranosyl)-sn-glycerol + UDP-alpha-D-glucose = a 1,2-diacyl-3-O-(beta-D-Glc-(1-&gt;6)-beta-D-Glc)-sn-glycerol + UDP + H(+). It catalyses the reaction a 1,2-diacyl-sn-glycerol + UDP-alpha-D-glucose = a 1,2-diacyl-3-O-(beta-D-glucopyranosyl)-sn-glycerol + UDP + H(+). The protein operates within glycolipid metabolism; diglucosyl-diacylglycerol biosynthesis. In terms of biological role, processive glucosyltransferase involved in the biosynthesis of both the bilayer- and non-bilayer-forming membrane glucolipids. Is able to successively transfer two glucosyl residues to diacylglycerol (DAG), thereby catalyzing the formation of beta-monoglucosyl-DAG (3-O-(beta-D-glucopyranosyl)-1,2-diacyl-sn-glycerol) and beta-diglucosyl-DAG (3-O-(beta-D-glucopyranosyl-beta-(1-&gt;6)-D-glucopyranosyl)-1,2-diacyl-sn-glycerol). Beta-diglucosyl-DAG is the predominant glycolipid found in Bacillales and is also used as a membrane anchor for lipoteichoic acid (LTA). The protein is Processive diacylglycerol beta-glucosyltransferase of Staphylococcus saprophyticus subsp. saprophyticus (strain ATCC 15305 / DSM 20229 / NCIMB 8711 / NCTC 7292 / S-41).